Reading from the N-terminus, the 546-residue chain is CTP synthase (546 aa).

Residues Met-1–Ile-266 form an amidoligase domain region. Ser-14 is a CTP binding site. Ser-14 is a UTP binding site. Residues Ser-15 to Ile-20 and Asp-72 contribute to the ATP site. 2 residues coordinate Mg(2+): Asp-72 and Glu-140. CTP is bound by residues Asp-147–Glu-149, Lys-187–Gln-192, and Lys-223. UTP-binding positions include Lys-187–Gln-192 and Lys-223. Residue Lys-239–Val-241 coordinates ATP. Residues Thr-291 to Gly-542 enclose the Glutamine amidotransferase type-1 domain. Gly-352 contacts L-glutamine. Cys-379 (nucleophile; for glutamine hydrolysis) is an active-site residue. Residues Leu-380–Gln-383, Glu-403, and Arg-470 contribute to the L-glutamine site. Active-site residues include His-515 and Glu-517.

The protein belongs to the CTP synthase family. As to quaternary structure, homotetramer.

It carries out the reaction UTP + L-glutamine + ATP + H2O = CTP + L-glutamate + ADP + phosphate + 2 H(+). The catalysed reaction is L-glutamine + H2O = L-glutamate + NH4(+). It catalyses the reaction UTP + NH4(+) + ATP = CTP + ADP + phosphate + 2 H(+). The protein operates within pyrimidine metabolism; CTP biosynthesis via de novo pathway; CTP from UDP: step 2/2. Allosterically activated by GTP, when glutamine is the substrate; GTP has no effect on the reaction when ammonia is the substrate. The allosteric effector GTP functions by stabilizing the protein conformation that binds the tetrahedral intermediate(s) formed during glutamine hydrolysis. Inhibited by the product CTP, via allosteric rather than competitive inhibition. Catalyzes the ATP-dependent amination of UTP to CTP with either L-glutamine or ammonia as the source of nitrogen. Regulates intracellular CTP levels through interactions with the four ribonucleotide triphosphates. The sequence is that of CTP synthase from Vibrio campbellii (strain ATCC BAA-1116).